Here is a 495-residue protein sequence, read N- to C-terminus: Potassium voltage-gated channel subfamily A member 1 (495 aa).

The tract at residues 1–30 (MTVMSGENADEASAAPGHPQDGSYPRQADH) is disordered. Residues 1–128 (MTVMSGENAD…FYELGEEAME (128 aa)) form a tetramerization domain region. At 1 to 164 (MTVMSGENAD…LLFEYPESSG (164 aa)) the chain is on the cytoplasmic side. Serine 23 carries the phosphoserine modification. A helical transmembrane segment spans residues 165 to 186 (PARVIAIVSVMVILISIVIFCL). The Extracellular portion of the chain corresponds to 187 to 220 (ETLPELKDDKDFTGTIHRIDNTTVIYTSNIFTDP). The N-linked (GlcNAc...) asparagine glycan is linked to asparagine 207. A helical membrane pass occupies residues 221 to 242 (FFIVETLCIIWFSFELVVRFFA). The S-palmitoyl cysteine moiety is linked to residue cysteine 243. Residues 243–253 (CPSKTDFFKNI) lie on the Cytoplasmic side of the membrane. The helical transmembrane segment at 254 to 274 (MNFIDIVAIIPYFITLGTEIA) threads the bilayer. At 275 to 287 (EQEGNQKGEQATS) the chain is on the extracellular side. The chain crosses the membrane as a helical; Voltage-sensor span at residues 288 to 308 (LAILRVIRLVRVFRIFKLSRH). The Cytoplasmic segment spans residues 309-323 (SKGLQILGQTLKASM). The tract at residues 310-323 (KGLQILGQTLKASM) is S4-S5 linker. Serine 322 carries the post-translational modification Phosphoserine; by PKA. Residues 324-345 (RELGLLIFFLFIGVILFSSAVY) traverse the membrane as a helical segment. Over 346-359 (FAEAEEAESHFSSI) the chain is Extracellular. The segment at residues 360-371 (PDAFWWAVVSMT) is an intramembrane region (helical). The short motif at 372-377 (TVGYGD) is the Selectivity filter element. An intramembrane segment occupies 372-379 (TVGYGDMY). Over 380 to 386 (PVTIGGK) the chain is Extracellular. A helical transmembrane segment spans residues 387 to 415 (IVGSLCAIAGVLTIALPVPVIVSNFNYFY). The Cytoplasmic segment spans residues 416 to 495 (HRETEGEEQA…VNKSKLLTDV (80 aa)). Residues serine 437 and serine 439 each carry the phosphoserine modification. Serine 446 is modified (phosphoserine; by PKA). The PDZ-binding motif lies at 493–495 (TDV).

The protein belongs to the potassium channel family. A (Shaker) (TC 1.A.1.2) subfamily. Kv1.1/KCNA1 sub-subfamily. As to quaternary structure, homotetramer and heterotetramer with other channel-forming alpha subunits, such as KCNA2, KCNA4, KCNA5, KCNA6 and KCNA7. Channel activity is regulated by interaction with the beta subunits KCNAB1 and KCNAB2. Identified in a complex with KCNA2 and KCNAB2. Interacts (via C-terminus) with the PDZ domains of DLG1, DLG2 and DLG4. Interacts with LGI1 within a complex containing LGI1, KCNA4 and KCNAB1. Interacts (via cytoplasmic N-terminal domain) with KCNRG; this inhibits channel activity. Interacts with ANK3; this inhibits channel activity. Interacts (via N-terminus) with STX1A; this promotes channel inactivation. Interacts (via N-terminus) with the heterodimer formed by GNB1 and GNG2; this promotes channel inactivation. Can interact simultaneously with STX1A and the heterodimer formed by GNB1 and GNG2. Interacts with ADAM11. In terms of processing, palmitoylated on Cys-243; which may be required for membrane targeting. N-glycosylated. Post-translationally, phosphorylated on tyrosine residues. Phosphorylation increases in response to NRG1; this inhibits channel activity. Phosphorylated by PKA. Phosphorylation at Ser-446 regulates channel activity by down-regulating expression at the cell membrane. Detected in hippocampus, in the middle third of the molecular layer of the dentate gyrus and in stratum radiatum and stratum oriens. Detected in the mossy fiber zone in the hippocampus CA3 region, at or near axon terminals. Detected in brain cortex, at basket cell terminals. Detected adjacent to nodes of Ranvier in juxtaparanodal zones in spinal cord nerve fibers, but also in paranodal regions in some myelinated spinal cord axons. Detected in juxtaparanodal regions adjacent to the nodes of Ranvier in myelinated axons in cerebellar white matter. Detected in sensory neurons. Detected in neurons from the medial nucleus of the trapezoid body. Detected in basolateral amygdala. Detected in the paraventricular nucleus of the hypothalamus. Detected in the islet of Langerhans (at protein level).

The protein localises to the cell membrane. It localises to the membrane. Its subcellular location is the cell projection. It is found in the axon. The protein resides in the cytoplasmic vesicle. The protein localises to the perikaryon. It localises to the endoplasmic reticulum. Its subcellular location is the dendrite. It is found in the cell junction. The protein resides in the synapse. The protein localises to the presynapse. It localises to the presynaptic cell membrane. It catalyses the reaction K(+)(in) = K(+)(out). Its activity is regulated as follows. Inhibited by 4-aminopyridine (4-AP) and by tetraethylammonium (TEA). Inhibited by kaliotoxin (KTX). Functionally, voltage-gated potassium channel that mediates transmembrane potassium transport in excitable membranes, primarily in the brain and the central nervous system, but also in the kidney. Contributes to the regulation of the membrane potential and nerve signaling, and prevents neuronal hyperexcitability. Forms tetrameric potassium-selective channels through which potassium ions pass in accordance with their electrochemical gradient. The channel alternates between opened and closed conformations in response to the voltage difference across the membrane. Can form functional homotetrameric channels and heterotetrameric channels that contain variable proportions of KCNA1, KCNA2, KCNA4, KCNA5, KCNA6, KCNA7, and possibly other family members as well; channel properties depend on the type of alpha subunits that are part of the channel. Channel properties are modulated by cytoplasmic beta subunits that regulate the subcellular location of the alpha subunits and promote rapid inactivation of delayed rectifier potassium channels. In vivo, membranes probably contain a mixture of heteromeric potassium channel complexes, making it difficult to assign currents observed in intact tissues to any particular potassium channel family member. Homotetrameric KCNA1 forms a delayed-rectifier potassium channel that opens in response to membrane depolarization, followed by slow spontaneous channel closure. In contrast, a heterotetrameric channel formed by KCNA1 and KCNA4 shows rapid inactivation. Regulates neuronal excitability in hippocampus, especially in mossy fibers and medial perforant path axons, preventing neuronal hyperexcitability. Response to toxins that are selective for KCNA1, respectively for KCNA2, suggests that heteromeric potassium channels composed of both KCNA1 and KCNA2 play a role in pacemaking and regulate the output of deep cerebellar nuclear neurons. May function as down-stream effector for G protein-coupled receptors and inhibit GABAergic inputs to basolateral amygdala neurons. May contribute to the regulation of neurotransmitter release, such as gamma-aminobutyric acid (GABA) release. Plays a role in regulating the generation of action potentials and preventing hyperexcitability in myelinated axons of the vagus nerve, and thereby contributes to the regulation of heart contraction. Required for normal neuromuscular responses. Regulates the frequency of neuronal action potential firing in response to mechanical stimuli, and plays a role in the perception of pain caused by mechanical stimuli, but does not play a role in the perception of pain due to heat stimuli. Required for normal responses to auditory stimuli and precise location of sound sources, but not for sound perception. The use of toxins that block specific channels suggest that it contributes to the regulation of the axonal release of the neurotransmitter dopamine. Required for normal postnatal brain development and normal proliferation of neuronal precursor cells in the brain. Plays a role in the reabsorption of Mg(2+) in the distal convoluted tubules in the kidney and in magnesium ion homeostasis, probably via its effect on the membrane potential. This chain is Potassium voltage-gated channel subfamily A member 1, found in Rattus norvegicus (Rat).